The primary structure comprises 174 residues: Ly6/PLAUR domain-containing protein 6 (174 aa).

The signal sequence occupies residues 1–22 (MEPWPLMAWGLMLTAITGWIKA). The UPAR/Ly6 domain occupies 47-141 (FKCFTCEDAP…PRNETDAIFS (95 aa)). 6 disulfide bridges follow: Cys49/Cys77, Cys52/Cys61, Cys70/Cys96, Cys102/Cys121, Cys107/Cys118, and Cys122/Cys127. 2 N-linked (GlcNAc...) asparagine glycosylation sites follow: Asn134 and Asn147. Ser149 is lipidated: GPI-anchor amidated serine. A propeptide spans 150 to 174 (AQSTQTLPLLLLSVSITSLMLHSIN) (removed in mature form).

Interacts with fzd8 and lrp6.

Its subcellular location is the cell membrane. It is found in the membrane raft. Functionally, acts as an important regulator of embryogenesis through its enhancement of Wnt/beta-catenin signaling. Positively regulates Wnt/beta-catenin signaling by ensuring phosphorylation of lrp6 specifically in plasma membrane rafts and its subsequent internalization into signaling-competent vesicles. Essential for the wnt8-mediated patterning of the mesoderm and neuroectoderm during gastrulation. This is Ly6/PLAUR domain-containing protein 6 (lypd6) from Danio rerio (Zebrafish).